The sequence spans 120 residues: Protein Wnt-9 (120 aa).

Serine 1 carries the O-palmitoleoyl serine; by PORCN lipid modification. Cysteine 90 and cysteine 101 form a disulfide bridge.

The protein belongs to the Wnt family. In terms of processing, palmitoleoylation is required for efficient binding to frizzled receptors. Depalmitoleoylation leads to Wnt signaling pathway inhibition.

The protein localises to the secreted. It localises to the extracellular space. Its subcellular location is the extracellular matrix. Ligand for members of the frizzled family of seven transmembrane receptors. Probable developmental protein. May be a signaling molecule which affects the development of discrete regions of tissues. Is likely to signal over only few cell diameters. The protein is Protein Wnt-9 (WNT-9) of Alopias vulpinus (Common thresher shark).